The chain runs to 327 residues: Ribosomal RNA large subunit methyltransferase F (327 aa).

Positions M1–Q31 are disordered.

It belongs to the methyltransferase superfamily. METTL16/RlmF family.

The protein resides in the cytoplasm. The catalysed reaction is adenosine(1618) in 23S rRNA + S-adenosyl-L-methionine = N(6)-methyladenosine(1618) in 23S rRNA + S-adenosyl-L-homocysteine + H(+). Specifically methylates the adenine in position 1618 of 23S rRNA. The chain is Ribosomal RNA large subunit methyltransferase F from Psychrobacter sp. (strain PRwf-1).